The chain runs to 94 residues: Large ribosomal subunit protein bL25 (94 aa).

Belongs to the bacterial ribosomal protein bL25 family. In terms of assembly, part of the 50S ribosomal subunit; part of the 5S rRNA/L5/L18/L25 subcomplex. Contacts the 5S rRNA. Binds to the 5S rRNA independently of L5 and L18.

Functionally, this is one of the proteins that binds to the 5S RNA in the ribosome where it forms part of the central protuberance. This is Large ribosomal subunit protein bL25 from Enterobacter sp. (strain 638).